The primary structure comprises 467 residues: ATP-dependent protease ATPase subunit HslU (467 aa).

Residues Val-22 and 64–69 (GVGKTE) each bind ATP. A disordered region spans residues 149–192 (QTNNPLESLFGGAIPNFGQNNEDEEEPPTEEIKTKRSEIKRQLE). Positions 178-192 (EEIKTKRSEIKRQLE) are enriched in basic and acidic residues. The ATP site is built by Asp-280, Glu-345, and Arg-417.

This sequence belongs to the ClpX chaperone family. HslU subfamily. In terms of assembly, a double ring-shaped homohexamer of HslV is capped on each side by a ring-shaped HslU homohexamer. The assembly of the HslU/HslV complex is dependent on binding of ATP.

The protein localises to the cytoplasm. In terms of biological role, ATPase subunit of a proteasome-like degradation complex; this subunit has chaperone activity. The binding of ATP and its subsequent hydrolysis by HslU are essential for unfolding of protein substrates subsequently hydrolyzed by HslV. HslU recognizes the N-terminal part of its protein substrates and unfolds these before they are guided to HslV for hydrolysis. The sequence is that of ATP-dependent protease ATPase subunit HslU from Staphylococcus aureus (strain bovine RF122 / ET3-1).